The following is a 501-amino-acid chain: Lysine--tRNA ligase (501 aa).

Residues glutamate 402 and glutamate 409 each coordinate Mg(2+).

This sequence belongs to the class-II aminoacyl-tRNA synthetase family. Homodimer. Mg(2+) serves as cofactor.

The protein localises to the cytoplasm. The catalysed reaction is tRNA(Lys) + L-lysine + ATP = L-lysyl-tRNA(Lys) + AMP + diphosphate. The sequence is that of Lysine--tRNA ligase from Helicobacter pylori (strain HPAG1).